A 459-amino-acid polypeptide reads, in one-letter code: UDP-N-acetylmuramate--L-alanine ligase (459 aa).

An ATP-binding site is contributed by 118–124 (GTHGKTT).

Belongs to the MurCDEF family.

The protein resides in the cytoplasm. It catalyses the reaction UDP-N-acetyl-alpha-D-muramate + L-alanine + ATP = UDP-N-acetyl-alpha-D-muramoyl-L-alanine + ADP + phosphate + H(+). Its pathway is cell wall biogenesis; peptidoglycan biosynthesis. In terms of biological role, cell wall formation. This Clostridium beijerinckii (strain ATCC 51743 / NCIMB 8052) (Clostridium acetobutylicum) protein is UDP-N-acetylmuramate--L-alanine ligase.